The chain runs to 344 residues: Sulfate/thiosulfate import ATP-binding protein CysA (344 aa).

The 231-residue stretch at isoleucine 3–leucine 233 folds into the ABC transporter domain. Glycine 35–serine 42 lines the ATP pocket.

This sequence belongs to the ABC transporter superfamily. Sulfate/tungstate importer (TC 3.A.1.6) family. In terms of assembly, the complex is composed of two ATP-binding proteins (CysA), two transmembrane proteins (CysT and CysW) and a solute-binding protein (CysP).

The protein resides in the cell inner membrane. It carries out the reaction sulfate(out) + ATP + H2O = sulfate(in) + ADP + phosphate + H(+). It catalyses the reaction thiosulfate(out) + ATP + H2O = thiosulfate(in) + ADP + phosphate + H(+). In terms of biological role, part of the ABC transporter complex CysAWTP involved in sulfate/thiosulfate import. Responsible for energy coupling to the transport system. This Gloeobacter violaceus (strain ATCC 29082 / PCC 7421) protein is Sulfate/thiosulfate import ATP-binding protein CysA.